A 319-amino-acid chain; its full sequence is MFVYTLIFLFLAAANAYSNPGPCSGNCWTHDPGLYQRKSDGKYFLFATGGGIHISSADDLAGPWTDDGFVLPDGSSIDLDGQNNLWAPDLHYRDGTYYLYYSVSALGSQNSAIGVATSETLEAGSWTDHGSTGVTSTPNSPYNTIDGNWIAVGDKQYLNFGSYWQNLFQVELADGLKVKEGATPHQLSYNASGIHRQEAAFMFERNSYFYLTFSGGVALGYNATWPAQGEEYHINVCRSTSATGGFVDKNGVSCLNSGGSLLLASHGFVYGPGGQGILEDRNKELVLYYHYADTRIGKAVEDYQFGWNQLKWENDWPSV.

The N-terminal stretch at 1-16 is a signal peptide; sequence MFVYTLIFLFLAAANA. D31 serves as the catalytic Proton acceptor. N190 is a glycosylation site (N-linked (GlcNAc...) asparagine). E198 (proton donor) is an active-site residue. N222 is a glycosylation site (N-linked (GlcNAc...) asparagine).

This sequence belongs to the glycosyl hydrolase 43 family.

The protein resides in the secreted. The enzyme catalyses Endohydrolysis of (1-&gt;5)-alpha-arabinofuranosidic linkages in (1-&gt;5)-arabinans.. It participates in glycan metabolism; L-arabinan degradation. In terms of biological role, endo-1,5-alpha-L-arabinanase involved in degradation of pectin. Its preferred substrate is linear 1,5-alpha-L-arabinan. This chain is Probable arabinan endo-1,5-alpha-L-arabinosidase C (abnC), found in Aspergillus clavatus (strain ATCC 1007 / CBS 513.65 / DSM 816 / NCTC 3887 / NRRL 1 / QM 1276 / 107).